A 74-amino-acid polypeptide reads, in one-letter code: ATP synthase subunit 9, mitochondrial (74 aa).

Helical transmembrane passes span 16–36 (GLIGAGVGIGVVFGALILGVA) and 50–70 (ILGFAFSEATGLFALMMAFLL).

It belongs to the ATPase C chain family. In terms of assembly, F-type ATPases have 2 components, CF(1) - the catalytic core - and CF(0) - the membrane proton channel. CF(1) has five subunits: alpha(3), beta(3), gamma(1), delta(1), epsilon(1). CF(0) has three main subunits: a, b and c.

The protein localises to the mitochondrion membrane. Functionally, mitochondrial membrane ATP synthase (F(1)F(0) ATP synthase or Complex V) produces ATP from ADP in the presence of a proton gradient across the membrane which is generated by electron transport complexes of the respiratory chain. F-type ATPases consist of two structural domains, F(1) - containing the extramembraneous catalytic core and F(0) - containing the membrane proton channel, linked together by a central stalk and a peripheral stalk. During catalysis, ATP synthesis in the catalytic domain of F(1) is coupled via a rotary mechanism of the central stalk subunits to proton translocation. Part of the complex F(0) domain. A homomeric c-ring of probably 10 subunits is part of the complex rotary element. This is ATP synthase subunit 9, mitochondrial (ATP9) from Trichophyton rubrum (Athlete's foot fungus).